A 500-amino-acid polypeptide reads, in one-letter code: Polyenoic fatty acid isomerase (500 aa).

Positions 1–21 are cleaved as a signal peptide; it reads MSLNRVLHIFLIAYLACTALT.

As to quaternary structure, homodimer. An oxidized flavin serves as cofactor. Post-translationally, glycosylated.

The catalysed reaction is (5Z,8Z,11Z,14Z,17Z)-eicosapentaenoate = (5Z,7E,9E,14Z,17Z)-icosapentaenoate. Involved in the biosynthesis of conjugated triene-containing fatty acids. Catalyzes the isomerization of a wide range of substrates containing three or more methylene interrupted olefins into a Z,E,E conjugated triene functionality. May be involved in a stress tolerance mechanism as response to intertidal habitats with direct sunlight, desiccation and high temperature. In vitro substrates include arachidonic acid ((5Z,8Z,11Z,14Z)-eicosatetraenoic acid), EPA ((5Z,8Z, 11Z,14Z,17Z)-eicosapentaenoic acid), DHA ((4Z,7Z,10Z,13Z,16Z,19Z)-docosahexenoic acid), adrenic acid ((7Z,10Z,13Z,16Z)-docosatetraenoic acid), anandamide (arachidonyl-N-ethanolamide) and eicosatrienoic acid ((5Z,8Z,11Z)-eicosatrienoic acid). Gamma-linolenic acid (18:3 6Z,9Z,12Z) and dihomo-gamma-linolenic acid (20:3 8Z,11Z,14Z) are transformed into mixtures of conjugated diene and triene fatty acids, linoleic acid is only transformed to a conjugated diene. The polypeptide is Polyenoic fatty acid isomerase (Ptilota filicina (Red alga)).